Reading from the N-terminus, the 648-residue chain is Transcription termination factor FttA (648 aa).

Positions 9–76 are KHa; sequence DDILKEIREI…ISVRPDPDIL (68 aa). Residues 77-144 form a KHb region; that stretch reads LPPEKAEELI…WAPRVVRTPP (68 aa). The metallo-beta-lactamase N-terminus stretch occupies residues 185-395; that stretch reads WIRITGLGGF…LVMESTYGGS (211 aa). H253, H255, D257, H258, H341, and D364 together coordinate Zn(2+). The tract at residues 396–589 is beta-Casp; the sequence is NDYQMPREEA…MEVHTIDGFS (194 aa). The segment at 590–648 is metallo-beta-lactamase C-terminus; it reads GHADRRELMSYVARVRPRPERIITVHGEAHKCLDLSSSIHKKFGISTRAPNNLDAIRLK. H615 provides a ligand contact to Zn(2+).

The protein belongs to the metallo-beta-lactamase superfamily. RNA-metabolizing metallo-beta-lactamase-like family. FttA subfamily. Homodimer. Probably interacts transiently with RNA polymerase (RNAP), (via at least the RNAP stalk subunits Rpo4 and Rpo7), interacts transiently with the Spt4-Spt5 complex. It depends on Zn(2+) as a cofactor.

Transcription termination is stimulated by the Spt4-Spt5 complex. Dipicolinic acid inhibits FttA-mediated termination in vitro and inhibits growth in vivo. Functionally, terminates transcription on the whole genome. Termination is linked to FttA-mediated RNA cleavage and does not require NTP hydrolysis. Cleaves endonucleolytically at the RNA exit channel of RNA polymerase (RNAP); the 5'-3' exonuclease activity of this protein degrades the nascent RNA released from RNAP. Its function is as follows. Facilitates transcription termination; addition of this factor to stalled transcription elongation complexes (TEC) promotes nascent transcript cleavage and releases RNA polymerase (RNAP) from DNA in vitro. Transcription termination competes with productive transcription elongation. Termination is stimulated by C-rich transcripts and inhibited by G-rich transcripts; the Spt4-Spt5 complex enhances termination on C-less transcripts. Yields an approximately 100 nucleotide RNA, consistent with endonucleolytic cleavage at the RNA exit channel of RNAP. The polypeptide is Transcription termination factor FttA (Thermococcus kodakarensis (strain ATCC BAA-918 / JCM 12380 / KOD1) (Pyrococcus kodakaraensis (strain KOD1))).